Here is a 560-residue protein sequence, read N- to C-terminus: Thermosome subunit alpha (560 aa).

Basic and acidic residues predominate over residues 535–547 (SEKKGGEGSKEES). The segment at 535 to 560 (SEKKGGEGSKEESGGEGGAGTPSLGD) is disordered.

Belongs to the TCP-1 chaperonin family. Forms a heterooligomeric complex of two stacked nine-membered rings; one of alpha and the other of beta subunits. Sometimes called a 'rosettasome'.

It localises to the cytoplasm. It catalyses the reaction ATP + H2O = ADP + phosphate + H(+). In terms of biological role, molecular chaperone; binds unfolded polypeptides in vitro, stimulates protein folding and has ATPase activity. One of the most abundant proteins in the cell at all temperatures. This is Thermosome subunit alpha (thsA) from Saccharolobus shibatae (strain ATCC 51178 / DSM 5389 / JCM 8931 / NBRC 15437 / B12) (Sulfolobus shibatae).